Reading from the N-terminus, the 650-residue chain is Chaperone protein DnaK (650 aa).

Phosphothreonine; by autocatalysis is present on T200. Residues 611-636 show a composition bias toward low complexity; the sequence is AQQAGAAGAAGAAEGAAHAGGAQQAA. The tract at residues 611–637 is disordered; it reads AQQAGAAGAAGAAEGAAHAGGAQQAAD.

Belongs to the heat shock protein 70 family.

Acts as a chaperone. The protein is Chaperone protein DnaK of Burkholderia ambifaria (strain MC40-6).